The following is a 62-amino-acid chain: Photosystem II reaction center protein Z (62 aa).

2 helical membrane passes run 8–28 (AVFA…AVFA) and 41–61 (FSGA…NSSV).

It belongs to the PsbZ family. As to quaternary structure, PSII is composed of 1 copy each of membrane proteins PsbA, PsbB, PsbC, PsbD, PsbE, PsbF, PsbH, PsbI, PsbJ, PsbK, PsbL, PsbM, PsbT, PsbY, PsbZ, Psb30/Ycf12, at least 3 peripheral proteins of the oxygen-evolving complex and a large number of cofactors. It forms dimeric complexes.

The protein resides in the plastid. It localises to the chloroplast thylakoid membrane. May control the interaction of photosystem II (PSII) cores with the light-harvesting antenna, regulates electron flow through the 2 photosystem reaction centers. PSII is a light-driven water plastoquinone oxidoreductase, using light energy to abstract electrons from H(2)O, generating a proton gradient subsequently used for ATP formation. This chain is Photosystem II reaction center protein Z, found in Selaginella uncinata (Blue spike-moss).